A 131-amino-acid chain; its full sequence is UPF0251 protein MMP0619 (131 aa).

The protein belongs to the UPF0251 family.

The chain is UPF0251 protein MMP0619 from Methanococcus maripaludis (strain DSM 14266 / JCM 13030 / NBRC 101832 / S2 / LL).